We begin with the raw amino-acid sequence, 580 residues long: Serine/threonine-protein kinase srk1 (580 aa).

A compositionally biased stretch (polar residues) spans 51 to 61 (VADSTQNPTSK). A disordered region spans residues 51 to 91 (VADSTQNPTSKPKSRHAHFHETVHENPSEYSRSKCKQPTNE). The region spanning 124–421 (YTLLQKMGDG…IHQFLAHPWI (298 aa)) is the Protein kinase domain. Residues 130-138 (MGDGAFSNV) and K153 each bind ATP. D257 (proton acceptor) is an active-site residue. The interval 530 to 580 (NLSGENDPSLASRQPAQSQQQSSQRSRNKFKGFQLNLSKATLYNRRHRQKV) is disordered. Low complexity predominate over residues 537–554 (PSLASRQPAQSQQQSSQR).

It belongs to the protein kinase superfamily. CAMK Ser/Thr protein kinase family. CaMK subfamily. Mg(2+) serves as cofactor. Phosphorylated by sty1.

It is found in the cytoplasm. The protein resides in the nucleus. The protein localises to the nucleolus. Its subcellular location is the spore core. The catalysed reaction is L-seryl-[protein] + ATP = O-phospho-L-seryl-[protein] + ADP + H(+). The enzyme catalyses L-threonyl-[protein] + ATP = O-phospho-L-threonyl-[protein] + ADP + H(+). In terms of biological role, delays the mitotic G2/M transition by promoting nuclear exclusion of cdc25. During osmotic stress, inhibits the G2/M transition in a sty1 stress-activated MAPK pathway-dependent manner. The polypeptide is Serine/threonine-protein kinase srk1 (Schizosaccharomyces pombe (strain 972 / ATCC 24843) (Fission yeast)).